The following is a 228-amino-acid chain: uncharacterized protein (228 aa).

The 115-residue stretch at 5-119 (HILIVEDEEK…ELLARIRAAL (115 aa)) folds into the Response regulatory domain. Asp-54 is modified (4-aspartylphosphate). The segment at residues 130 to 228 (GTFLTYDDLR…IRGVGYAIKG (99 aa)) is a DNA-binding region (ompR/PhoB-type).

Phosphorylated by YkoH.

It localises to the cytoplasm. Its function is as follows. Probable member of the two-component regulatory system YkoH/YkoG. This is an uncharacterized protein from Bacillus subtilis (strain 168).